A 281-amino-acid chain; its full sequence is 18S rRNA (guanine-N(7))-methyltransferase (281 aa).

Over residues 212 to 231 (LPKGLTESQDADQASESMFT) the composition is skewed to polar residues. Positions 212 to 281 (LPKGLTESQD…YTGRKRKPRF (70 aa)) are disordered. A compositionally biased stretch (basic and acidic residues) spans 242 to 256 (RDLVKKSREWVLEKK).

Belongs to the class I-like SAM-binding methyltransferase superfamily. BUD23/WBSCR22 family. In terms of assembly, heterodimer with TRMT112; this heterodimerization is necessary for the metabolic stability and activity of the catalytic subunit BUD23. Interacts with GRIP1. May be ubiquitinated and targeted to degradation in response to pro-inflammatory cytokine signaling.

It localises to the nucleus. The protein localises to the nucleoplasm. The protein resides in the cytoplasm. Its subcellular location is the perinuclear region. The enzyme catalyses a guanosine in 18S rRNA + S-adenosyl-L-methionine = an N(7)-methylguanosine in 18S rRNA + S-adenosyl-L-homocysteine. S-adenosyl-L-methionine-dependent methyltransferase that specifically methylates the N(7) position of a guanine in 18S rRNA. Requires the methyltransferase adapter protein TRM112 for full rRNA methyltransferase activity. Involved in the pre-rRNA processing steps leading to small-subunit rRNA production independently of its RNA-modifying catalytic activity. Important for biogenesis end export of the 40S ribosomal subunit independent on its methyltransferase activity. Locus-specific steroid receptor coactivator. Potentiates transactivation by glucocorticoid (NR3C1), mineralocorticoid (NR3C2), androgen (AR) and progesterone (PGR) receptors. Required for the maintenance of open chromatin at the TSC22D3/GILZ locus to facilitate NR3C1 loading on the response elements. Required for maintenance of dimethylation on histone H3 'Lys-79' (H3K79me2), although direct histone methyltransferase activity is not observed in vitro. This chain is 18S rRNA (guanine-N(7))-methyltransferase, found in Mus musculus (Mouse).